The sequence spans 180 residues: MKDVTYYLISLASQSPAGSFGLNTNNLVTTLINIAVVLSLLIVFGKGFLRDFLDTRKNRIVNTIQISDELYSGAVEKLEKAQARLCKVEKEAKQLRVTGYSEIEQEKLNLINSTYKTLERLEKKKKETCSFEQQRAINDVRQWVLQQTLQRVLKTLNGSLNPELHLHTIRVNISMLGTLK.

Residues 27–49 (LVTTLINIAVVLSLLIVFGKGFL) traverse the membrane as a helical segment.

This sequence belongs to the ATPase B chain family. F-type ATPases have 2 components, F(1) - the catalytic core - and F(0) - the membrane proton channel. F(1) has five subunits: alpha(3), beta(3), gamma(1), delta(1), epsilon(1). F(0) has four main subunits: a(1), b(1), b'(1) and c(10-14). The alpha and beta chains form an alternating ring which encloses part of the gamma chain. F(1) is attached to F(0) by a central stalk formed by the gamma and epsilon chains, while a peripheral stalk is formed by the delta, b and b' chains.

The protein localises to the plastid membrane. F(1)F(0) ATP synthase produces ATP from ADP in the presence of a proton or sodium gradient. F-type ATPases consist of two structural domains, F(1) containing the extramembraneous catalytic core and F(0) containing the membrane proton channel, linked together by a central stalk and a peripheral stalk. During catalysis, ATP synthesis in the catalytic domain of F(1) is coupled via a rotary mechanism of the central stalk subunits to proton translocation. In terms of biological role, component of the F(0) channel, it forms part of the peripheral stalk, linking F(1) to F(0). The sequence is that of ATP synthase subunit b, plastid from Cuscuta gronovii (Common dodder).